A 132-amino-acid polypeptide reads, in one-letter code: Small ribosomal subunit protein uS8 (132 aa).

The protein belongs to the universal ribosomal protein uS8 family. Part of the 30S ribosomal subunit. Contacts proteins S5 and S12.

Its function is as follows. One of the primary rRNA binding proteins, it binds directly to 16S rRNA central domain where it helps coordinate assembly of the platform of the 30S subunit. The protein is Small ribosomal subunit protein uS8 of Rhizobium johnstonii (strain DSM 114642 / LMG 32736 / 3841) (Rhizobium leguminosarum bv. viciae).